The following is a 39-amino-acid chain: Protein YkiC (39 aa).

Residues 13–35 (LLSAKLCNCTQAIMTHIIASFLA) form a helical membrane-spanning segment.

The protein localises to the cell inner membrane. The polypeptide is Protein YkiC (Escherichia coli (strain K12)).